Consider the following 307-residue polypeptide: Protoheme IX farnesyltransferase (307 aa).

A run of 9 helical transmembrane segments spans residues 31–51 (VTQLAVFCAIIGMFLATPGMV), 55–75 (VLIGGAAGIWLLAGAAFAINC), 103–123 (TLVFSAILGGAGMWLLHVYAN), 125–145 (LTMWLTFATFLGYAVVYTILL), 153–173 (IVIGGLSGAMPPALGWAAVAG), 179–199 (AWFLVLIIFTWTPPHFWALAL), 223–243 (LLHILLYTLIMIAATLLPFVY), 246–266 (SGYIYLAAALALGAGFLAYAW), and 285–305 (ILYLSLLFAALLVDHYFKFVP).

The protein belongs to the UbiA prenyltransferase family. Protoheme IX farnesyltransferase subfamily.

It is found in the cell inner membrane. It carries out the reaction heme b + (2E,6E)-farnesyl diphosphate + H2O = Fe(II)-heme o + diphosphate. Its pathway is porphyrin-containing compound metabolism; heme O biosynthesis; heme O from protoheme: step 1/1. Functionally, converts heme B (protoheme IX) to heme O by substitution of the vinyl group on carbon 2 of heme B porphyrin ring with a hydroxyethyl farnesyl side group. The polypeptide is Protoheme IX farnesyltransferase (Cupriavidus necator (strain ATCC 17699 / DSM 428 / KCTC 22496 / NCIMB 10442 / H16 / Stanier 337) (Ralstonia eutropha)).